We begin with the raw amino-acid sequence, 161 residues long: Shikimate kinase (161 aa).

ATP is bound at residue 10 to 15 (GAGKTT). T14 contributes to the Mg(2+) binding site. Positions 28, 52, and 74 each coordinate substrate. Residue R114 participates in ATP binding. Substrate is bound at residue R132.

This sequence belongs to the shikimate kinase family. Monomer. Mg(2+) is required as a cofactor.

It is found in the cytoplasm. The enzyme catalyses shikimate + ATP = 3-phosphoshikimate + ADP + H(+). The protein operates within metabolic intermediate biosynthesis; chorismate biosynthesis; chorismate from D-erythrose 4-phosphate and phosphoenolpyruvate: step 5/7. In terms of biological role, catalyzes the specific phosphorylation of the 3-hydroxyl group of shikimic acid using ATP as a cosubstrate. In Streptococcus gordonii (strain Challis / ATCC 35105 / BCRC 15272 / CH1 / DL1 / V288), this protein is Shikimate kinase.